Consider the following 101-residue polypeptide: Iron-sulfur cluster assembly protein CyaY (101 aa).

The protein belongs to the frataxin family.

Functionally, involved in iron-sulfur (Fe-S) cluster assembly. May act as a regulator of Fe-S biogenesis. This Haemophilus influenzae (strain 86-028NP) protein is Iron-sulfur cluster assembly protein CyaY.